Here is a 489-residue protein sequence, read N- to C-terminus: Probable anthranilate synthase component 1 (489 aa).

L-tryptophan contacts are provided by residues Ser-54 and 262–264 (PYM). Position 297-298 (297-298 (GT)) interacts with chorismate. Mg(2+) is bound at residue Glu-324. A phosphoserine mark is found at Ser-390 and Ser-392. Chorismate is bound by residues Tyr-412, Arg-433, 447–449 (GGG), and Gly-449. Residue Glu-462 coordinates Mg(2+). Ser-488 carries the post-translational modification Phosphoserine.

This sequence belongs to the anthranilate synthase component I family. In terms of assembly, tetramer of two components I and two components II. Requires Mg(2+) as cofactor.

It catalyses the reaction chorismate + L-glutamine = anthranilate + pyruvate + L-glutamate + H(+). It participates in amino-acid biosynthesis; L-tryptophan biosynthesis; L-tryptophan from chorismate: step 1/5. The polypeptide is Probable anthranilate synthase component 1 (trp3) (Schizosaccharomyces pombe (strain 972 / ATCC 24843) (Fission yeast)).